The primary structure comprises 539 residues: Chaperonin GroEL (539 aa).

Residues 29-32 (TLGP), 86-90 (DGTTT), glycine 413, 476-478 (NAA), and aspartate 492 each bind ATP.

The protein belongs to the chaperonin (HSP60) family. As to quaternary structure, forms a cylinder of 14 subunits composed of two heptameric rings stacked back-to-back. Interacts with the co-chaperonin GroES.

The protein localises to the cytoplasm. The catalysed reaction is ATP + H2O + a folded polypeptide = ADP + phosphate + an unfolded polypeptide.. In terms of biological role, together with its co-chaperonin GroES, plays an essential role in assisting protein folding. The GroEL-GroES system forms a nano-cage that allows encapsulation of the non-native substrate proteins and provides a physical environment optimized to promote and accelerate protein folding. In Geobacillus sp. (strain WCH70), this protein is Chaperonin GroEL.